We begin with the raw amino-acid sequence, 463 residues long: Sodium-coupled neutral amino acid transporter 7 (463 aa).

At Ser28 the chain carries Phosphoserine. The next 11 helical transmembrane spans lie at 56–76 (AVFI…PAAF), 82–102 (VAAG…GLVI), 130–150 (LCEV…LIII), 179–199 (FTIS…KEIG), 206–226 (FLSV…YIWP), 240–260 (ASWM…QCHV), 283–303 (AAMV…FLTF), 320–340 (VAVA…YPIL), 372–392 (VLQT…IPDI), 396–416 (ISVI…LCLI), and 429–449 (ASWW…AFIF).

The protein belongs to the amino acid/polyamine transporter 2 family. In terms of assembly, interacts with the mTORC1 complex; this interaction mediates the recruitment of mTORC1 to the lysosome and its subsequent activation. In terms of tissue distribution, highly expressed in the brain, including the hippocampus, especially in the granular layer of dentate gyrus cells and the pyramidal cell layer of the hippocampus, amygdala, thalamus, hypothalamus, in the layer of Purkinje cells in the cerebellum and the layers of cortex. Particularly strong expression in neurons of the ventromedial hypothalamus, basolateral amygdala, ventral tegmental area, and locus coeruleus. Not detected in glial cells, including astrocytes. In addition to brain, also expressed in the spinal cord (at protein level).

The protein resides in the lysosome membrane. Its subcellular location is the cell projection. It localises to the axon. It carries out the reaction L-glutamine(in) + Na(+)(in) = L-glutamine(out) + Na(+)(out). The catalysed reaction is L-asparagine(in) + Na(+)(in) = L-asparagine(out) + Na(+)(out). In terms of biological role, symporter that selectively cotransports sodium ions and amino acids, such as L-glutamine and L-asparagine from the lysosome into the cytoplasm and may participates in mTORC1 activation. The transport activity requires an acidic lysosomal lumen. The polypeptide is Sodium-coupled neutral amino acid transporter 7 (Mus musculus (Mouse)).